The chain runs to 413 residues: Lipoyl synthase, mitochondrial (413 aa).

The transit peptide at 1–33 (MAAATNRFRALYSSSRVATPQAGSASYLSYRGY) directs the protein to the mitochondrion. C133, C138, C144, C164, C168, C171, and S379 together coordinate [4Fe-4S] cluster. Residues 147 to 368 (GGDKAAATAT…RQRALDMGFL (222 aa)) form the Radical SAM core domain.

This sequence belongs to the radical SAM superfamily. Lipoyl synthase family. Requires [4Fe-4S] cluster as cofactor.

The protein localises to the mitochondrion. The catalysed reaction is [[Fe-S] cluster scaffold protein carrying a second [4Fe-4S](2+) cluster] + N(6)-octanoyl-L-lysyl-[protein] + 2 oxidized [2Fe-2S]-[ferredoxin] + 2 S-adenosyl-L-methionine + 4 H(+) = [[Fe-S] cluster scaffold protein] + N(6)-[(R)-dihydrolipoyl]-L-lysyl-[protein] + 4 Fe(3+) + 2 hydrogen sulfide + 2 5'-deoxyadenosine + 2 L-methionine + 2 reduced [2Fe-2S]-[ferredoxin]. Its pathway is protein modification; protein lipoylation via endogenous pathway; protein N(6)-(lipoyl)lysine from octanoyl-[acyl-carrier-protein]: step 2/2. Catalyzes the radical-mediated insertion of two sulfur atoms into the C-6 and C-8 positions of the octanoyl moiety bound to the lipoyl domains of lipoate-dependent enzymes, thereby converting the octanoylated domains into lipoylated derivatives. In Emericella nidulans (strain FGSC A4 / ATCC 38163 / CBS 112.46 / NRRL 194 / M139) (Aspergillus nidulans), this protein is Lipoyl synthase, mitochondrial.